A 160-amino-acid chain; its full sequence is Major pollen allergen Aln g 1 (160 aa).

It belongs to the BetVI family.

The chain is Major pollen allergen Aln g 1 from Alnus glutinosa (European alder).